We begin with the raw amino-acid sequence, 147 residues long: Hemoglobin subunit beta (147 aa).

Val-2 carries the N-acetylvaline modification. The region spanning 3–147 (HLTGEEKSAV…VANALAHKYH (145 aa)) is the Globin domain. Position 13 is a phosphothreonine (Thr-13). At Ser-45 the chain carries Phosphoserine. Lys-60 is subject to N6-acetyllysine. His-64 lines the heme b pocket. Lys-83 carries the post-translational modification N6-acetyllysine. A heme b-binding site is contributed by His-93. S-nitrosocysteine is present on Cys-94. Lys-145 bears the N6-acetyllysine mark.

Belongs to the globin family. As to quaternary structure, heterotetramer of two alpha chains and two beta chains. Red blood cells.

Involved in oxygen transport from the lung to the various peripheral tissues. The protein is Hemoglobin subunit beta (HBB) of Callimico goeldii (Goeldi's marmoset).